We begin with the raw amino-acid sequence, 64 residues long: Translation machinery-associated protein 7 homolog (64 aa).

The tract at residues 1–64 (MSGREGGKKK…QGGIKKSGKK (64 aa)) is disordered. Positions 27–44 (VAFKQKQKEQQKALDAAK) are enriched in basic and acidic residues.

It belongs to the TMA7 family.

The protein is Translation machinery-associated protein 7 homolog of Anopheles funestus (African malaria mosquito).